The primary structure comprises 869 residues: Rho GTPase-activating protein 27 (869 aa).

The SH3 domain maps to 6–69 (EGDVYVLVEH…PAQYVRELPA (64 aa)). A disordered region spans residues 104-137 (GADGSSAEPRGRASSLCGPARQRTSGQRNSLAPG). Phosphoserine occurs at positions 155, 215, and 249. 2 WW domains span residues 246–280 (PRLS…SPFE) and 299–333 (ESLE…DETE). 3 disordered regions span residues 275–299 (WESP…GSGE), 331–389 (ETEE…DLGP), and 447–474 (VPVP…PEEK). Over residues 331–343 (ETEELEDDPEEQL) the composition is skewed to acidic residues. Polar residues predominate over residues 345 to 356 (MQPSLSPRSPGQ). S350 bears the Phosphoserine mark. One can recognise a WW 3 domain in the interval 414-447 (QFTQEQWVRLEDQEGKPYFYNPEDSSVQWELPQV). S459 and S462 each carry phosphoserine. T464 is subject to Phosphothreonine. S469 is subject to Phosphoserine. Residues 477–593 (TLDKAGVLHR…WHKAIAEGIE (117 aa)) form the PH domain. The interval 598–644 (DLPQREEGEPSSADFGSSERLGSWKEEDVRPNAASPSLNPGSQESDL) is disordered. Residues 631–642 (ASPSLNPGSQES) show a composition bias toward polar residues. At S632 the chain carries Phosphoserine. One can recognise a Rho-GAP domain in the interval 677–866 (CALAQLCERE…LILHQCADIF (190 aa)).

Interacts with SH3KBP1/CIN85.

It is found in the cytoplasm. Its subcellular location is the membrane. Rho GTPase-activating protein which may be involved in clathrin-mediated endocytosis. GTPase activators for the Rho-type GTPases act by converting them to an inactive GDP-bound state. Has activity toward CDC42 and RAC1. This chain is Rho GTPase-activating protein 27 (Arhgap27), found in Rattus norvegicus (Rat).